We begin with the raw amino-acid sequence, 71 residues long: Small ribosomal subunit protein bS21 (71 aa).

Residues 38-71 form a disordered region; that stretch reads YEKPTTVRKRAKAAAQKRHAKKLSRENARRVRLY. A compositionally biased stretch (basic residues) spans 43–59; it reads TVRKRAKAAAQKRHAKK. A compositionally biased stretch (basic and acidic residues) spans 60–71; it reads LSRENARRVRLY.

This sequence belongs to the bacterial ribosomal protein bS21 family.

The sequence is that of Small ribosomal subunit protein bS21 from Aliivibrio fischeri (strain ATCC 700601 / ES114) (Vibrio fischeri).